A 268-amino-acid chain; its full sequence is Formamidopyrimidine-DNA glycosylase (268 aa).

The active-site Schiff-base intermediate with DNA is the P2. The active-site Proton donor is the E3. K56 serves as the catalytic Proton donor; for beta-elimination activity. H91, R110, and R149 together coordinate DNA. Residues 234–268 (QVYGRFNQACPNCGQPLKRSRIGGRSSHYCEKCQQ) form an FPG-type zinc finger. The active-site Proton donor; for delta-elimination activity is the R258.

The protein belongs to the FPG family. As to quaternary structure, monomer. Zn(2+) is required as a cofactor.

The catalysed reaction is Hydrolysis of DNA containing ring-opened 7-methylguanine residues, releasing 2,6-diamino-4-hydroxy-5-(N-methyl)formamidopyrimidine.. It catalyses the reaction 2'-deoxyribonucleotide-(2'-deoxyribose 5'-phosphate)-2'-deoxyribonucleotide-DNA = a 3'-end 2'-deoxyribonucleotide-(2,3-dehydro-2,3-deoxyribose 5'-phosphate)-DNA + a 5'-end 5'-phospho-2'-deoxyribonucleoside-DNA + H(+). In terms of biological role, involved in base excision repair of DNA damaged by oxidation or by mutagenic agents. Acts as a DNA glycosylase that recognizes and removes damaged bases. Has a preference for oxidized purines, such as 7,8-dihydro-8-oxoguanine (8-oxoG). Has AP (apurinic/apyrimidinic) lyase activity and introduces nicks in the DNA strand. Cleaves the DNA backbone by beta-delta elimination to generate a single-strand break at the site of the removed base with both 3'- and 5'-phosphates. This Syntrophomonas wolfei subsp. wolfei (strain DSM 2245B / Goettingen) protein is Formamidopyrimidine-DNA glycosylase.